The following is a 199-amino-acid chain: Large ribosomal subunit protein uL13A (199 aa).

Ser2 is subject to N-acetylserine. Lys177 participates in a covalent cross-link: Glycyl lysine isopeptide (Lys-Gly) (interchain with G-Cter in ubiquitin).

Belongs to the universal ribosomal protein uL13 family. As to quaternary structure, component of the large ribosomal subunit (LSU). Mature yeast ribosomes consist of a small (40S) and a large (60S) subunit. The 40S small subunit contains 1 molecule of ribosomal RNA (18S rRNA) and 33 different proteins (encoded by 57 genes). The large 60S subunit contains 3 rRNA molecules (25S, 5.8S and 5S rRNA) and 46 different proteins (encoded by 81 genes). N-terminally acetylated by acetyltransferase NatA.

The protein localises to the cytoplasm. Its function is as follows. Component of the ribosome, a large ribonucleoprotein complex responsible for the synthesis of proteins in the cell. The small ribosomal subunit (SSU) binds messenger RNAs (mRNAs) and translates the encoded message by selecting cognate aminoacyl-transfer RNA (tRNA) molecules. The large subunit (LSU) contains the ribosomal catalytic site termed the peptidyl transferase center (PTC), which catalyzes the formation of peptide bonds, thereby polymerizing the amino acids delivered by tRNAs into a polypeptide chain. The nascent polypeptides leave the ribosome through a tunnel in the LSU and interact with protein factors that function in enzymatic processing, targeting, and the membrane insertion of nascent chains at the exit of the ribosomal tunnel. This chain is Large ribosomal subunit protein uL13A, found in Saccharomyces cerevisiae (strain ATCC 204508 / S288c) (Baker's yeast).